A 480-amino-acid polypeptide reads, in one-letter code: RuvB-like helicase 2 (480 aa).

Position 76 to 83 (76 to 83 (GPPSTGKT)) interacts with ATP.

The protein belongs to the RuvB family. In terms of assembly, may form heterododecamers with RVB1. Component of the SWR1 chromatin remodeling complex, the INO80 chromatin remodeling complex, and of the R2TP complex.

Its subcellular location is the nucleus. It catalyses the reaction ATP + H2O = ADP + phosphate + H(+). DNA helicase which participates in several chromatin remodeling complexes, including the SWR1 and the INO80 complexes. The SWR1 complex mediates the ATP-dependent exchange of histone H2A for the H2A variant HZT1 leading to transcriptional regulation of selected genes by chromatin remodeling. The INO80 complex remodels chromatin by shifting nucleosomes and is involved in DNA repair. Also involved in pre-rRNA processing. The chain is RuvB-like helicase 2 (RVB2) from Debaryomyces hansenii (strain ATCC 36239 / CBS 767 / BCRC 21394 / JCM 1990 / NBRC 0083 / IGC 2968) (Yeast).